Consider the following 257-residue polypeptide: Phosphonates import ATP-binding protein PhnC 1 (257 aa).

In terms of domain architecture, ABC transporter spans 2 to 246 (LKITNLTKRY…EMDTIYAGVP (245 aa)). 35 to 42 (GSSGAGKS) contributes to the ATP binding site.

This sequence belongs to the ABC transporter superfamily. Phosphonates importer (TC 3.A.1.9.1) family. The complex is composed of two ATP-binding proteins (PhnC), two transmembrane proteins (PhnE) and a solute-binding protein (PhnD).

The protein localises to the cell inner membrane. The catalysed reaction is phosphonate(out) + ATP + H2O = phosphonate(in) + ADP + phosphate + H(+). In terms of biological role, part of the ABC transporter complex PhnCDE involved in phosphonates import. Responsible for energy coupling to the transport system. The protein is Phosphonates import ATP-binding protein PhnC 1 of Ruegeria sp. (strain TM1040) (Silicibacter sp.).